The following is a 218-amino-acid chain: Guanylate kinase (218 aa).

A Guanylate kinase-like domain is found at 15–194 (GMMLVLSSPS…SIADVRAILR (180 aa)). 22-29 (SPSGAGKT) contributes to the ATP binding site.

It belongs to the guanylate kinase family.

It is found in the cytoplasm. It carries out the reaction GMP + ATP = GDP + ADP. In terms of biological role, essential for recycling GMP and indirectly, cGMP. This is Guanylate kinase from Rhodospirillum rubrum (strain ATCC 11170 / ATH 1.1.1 / DSM 467 / LMG 4362 / NCIMB 8255 / S1).